A 325-amino-acid chain; its full sequence is tRNA N6-adenosine threonylcarbamoyltransferase (325 aa).

Fe cation contacts are provided by His-107 and His-111. Residues 129 to 133 (LVSGG), Asp-162, Gly-175, and Asn-265 contribute to the substrate site. Asp-293 contributes to the Fe cation binding site.

The protein belongs to the KAE1 / TsaD family. The cofactor is Fe(2+).

It is found in the cytoplasm. The enzyme catalyses L-threonylcarbamoyladenylate + adenosine(37) in tRNA = N(6)-L-threonylcarbamoyladenosine(37) in tRNA + AMP + H(+). Required for the formation of a threonylcarbamoyl group on adenosine at position 37 (t(6)A37) in tRNAs that read codons beginning with adenine. Is involved in the transfer of the threonylcarbamoyl moiety of threonylcarbamoyl-AMP (TC-AMP) to the N6 group of A37, together with TsaE and TsaB. TsaD likely plays a direct catalytic role in this reaction. The polypeptide is tRNA N6-adenosine threonylcarbamoyltransferase (Sulfurimonas denitrificans (strain ATCC 33889 / DSM 1251) (Thiomicrospira denitrificans (strain ATCC 33889 / DSM 1251))).